Reading from the N-terminus, the 264-residue chain is Glutamate racemase (264 aa).

Residues 10–11 (DS) and 42–43 (YG) contribute to the substrate site. Cys73 serves as the catalytic Proton donor/acceptor. A substrate-binding site is contributed by 74-75 (NT). The active-site Proton donor/acceptor is the Cys183. 184–185 (TH) provides a ligand contact to substrate.

Belongs to the aspartate/glutamate racemases family.

It carries out the reaction L-glutamate = D-glutamate. Its pathway is cell wall biogenesis; peptidoglycan biosynthesis. Its function is as follows. Provides the (R)-glutamate required for cell wall biosynthesis. In Streptococcus gordonii (strain Challis / ATCC 35105 / BCRC 15272 / CH1 / DL1 / V288), this protein is Glutamate racemase.